Reading from the N-terminus, the 470-residue chain is Cysteine--tRNA ligase (470 aa).

Cys-28 serves as a coordination point for Zn(2+). A 'HIGH' region motif is present at residues 30–40; sequence PTVYNYIHIGN. Zn(2+)-binding residues include Cys-212, His-237, and Glu-241. Residues 271-275 carry the 'KMSKS' region motif; it reads KMSKS. Residue Lys-274 coordinates ATP.

Belongs to the class-I aminoacyl-tRNA synthetase family. Monomer. It depends on Zn(2+) as a cofactor.

It localises to the cytoplasm. The catalysed reaction is tRNA(Cys) + L-cysteine + ATP = L-cysteinyl-tRNA(Cys) + AMP + diphosphate. This Lactiplantibacillus plantarum (strain ATCC BAA-793 / NCIMB 8826 / WCFS1) (Lactobacillus plantarum) protein is Cysteine--tRNA ligase.